Consider the following 134-residue polypeptide: Beta-synuclein (134 aa).

2 repeat units span residues 20 to 30 (EKTKQGVTEAA) and 31 to 41 (EKTKEGVLYVG). The interval 20–67 (EKTKQGVTEAAEKTKEGVLYVGSKTKEGVVQGVASVAEKTKEQASHLG) is 4 X 11 AA tandem repeats of [EGS]-K-T-K-[EQ]-[GQ]-V-X(4). A 3; approximate repeat occupies 42–56 (SKTKEGVVQGVASVA). Repeat 4 spans residues 57–67 (EKTKEQASHLG). The tract at residues 97 to 134 (EVAQEAAEEPLIEPLMEPEGESYEEQPQEEYQEYEPEA) is disordered. Residues 98–134 (VAQEAAEEPLIEPLMEPEGESYEEQPQEEYQEYEPEA) show a composition bias toward acidic residues. Position 118 is a phosphoserine; by BARK1, CK2 and GRK5 (serine 118).

Belongs to the synuclein family. In terms of processing, phosphorylated. Phosphorylation by G-protein coupled receptor kinases (GRK) is more efficient than phosphorylation by CK1, CK2 and CaM-kinase II. Specifically present in synapses around neurons but not in glial cells.

It is found in the cytoplasm. May be involved in neuronal plasticity. The chain is Beta-synuclein (SNCB) from Bos taurus (Bovine).